The following is a 203-amino-acid chain: Orotate phosphoribosyltransferase (203 aa).

5-phospho-alpha-D-ribose 1-diphosphate-binding positions include Arg94, Lys98, His100, and 120–128 (EDLISTGGS). Position 124 (Ser124) interacts with orotate.

Belongs to the purine/pyrimidine phosphoribosyltransferase family. PyrE subfamily. In terms of assembly, homodimer. The cofactor is Mg(2+).

The catalysed reaction is orotidine 5'-phosphate + diphosphate = orotate + 5-phospho-alpha-D-ribose 1-diphosphate. It participates in pyrimidine metabolism; UMP biosynthesis via de novo pathway; UMP from orotate: step 1/2. Its function is as follows. Catalyzes the transfer of a ribosyl phosphate group from 5-phosphoribose 1-diphosphate to orotate, leading to the formation of orotidine monophosphate (OMP). The protein is Orotate phosphoribosyltransferase of Staphylococcus aureus (strain COL).